The following is a 291-amino-acid chain: Putative butyrophilin-like protein 10 pseudogene (291 aa).

Positions 1–26 (MAVTCDPEAFLSICFVTLVFLQLPLA) are cleaved as a signal peptide. In terms of domain architecture, Ig-like V-type spans 27 to 146 (SIWKADFDVT…GEATVQVQVA (120 aa)). Topologically, residues 27–254 (SIWKADFDVT…RSSQFTAWKA (228 aa)) are extracellular. Cys-54 and Cys-128 are oxidised to a cystine. Asn-59 carries N-linked (GlcNAc...) asparagine glycosylation. A helical transmembrane segment spans residues 255-275 (ALPLILVAMGLVIAGGICIFW). The Cytoplasmic segment spans residues 276–291 (KRQREKNKASLEEERE).

This sequence belongs to the immunoglobulin superfamily. BTN/MOG family.

It is found in the membrane. This is Putative butyrophilin-like protein 10 pseudogene from Homo sapiens (Human).